The chain runs to 298 residues: Tyrosine recombinase XerC (298 aa).

The Core-binding (CB) domain maps to 2–88 (TDLHTDVERY…ALRSFFDWLV (87 aa)). Residues 109 to 288 (HLPKNIDVDD…DFQHLASVYD (180 aa)) form the Tyr recombinase domain. Catalysis depends on residues Arg-148, Lys-172, His-240, Arg-243, and His-266. The O-(3'-phospho-DNA)-tyrosine intermediate role is filled by Tyr-275.

It belongs to the 'phage' integrase family. XerC subfamily. As to quaternary structure, forms a cyclic heterotetrameric complex composed of two molecules of XerC and two molecules of XerD, in which XerC interacts with XerD via its C-terminal region, XerD interacts with XerC via its C-terminal region and so on.

It localises to the cytoplasm. Its activity is regulated as follows. FtsK may regulate the catalytic switch between XerC and XerD in the heterotetrameric complex during the two steps of the recombination process. Site-specific tyrosine recombinase, which acts by catalyzing the cutting and rejoining of the recombining DNA molecules. Binds cooperatively to specific DNA consensus sequences that are separated from XerD binding sites by a short central region, forming the heterotetrameric XerC-XerD complex that recombines DNA substrates. The complex is essential to convert dimers of the bacterial chromosome into monomers to permit their segregation at cell division. It also contributes to the segregational stability of plasmids. In the complex XerC specifically exchanges the top DNA strands. The protein is Tyrosine recombinase XerC of Shigella dysenteriae serotype 1 (strain Sd197).